Here is a 427-residue protein sequence, read N- to C-terminus: Trigger factor (427 aa).

Positions 160 to 240 (TDTVIGDVVK…VKEVKRLELP (81 aa)) constitute a PPIase FKBP-type domain.

The protein belongs to the FKBP-type PPIase family. Tig subfamily.

Its subcellular location is the cytoplasm. The catalysed reaction is [protein]-peptidylproline (omega=180) = [protein]-peptidylproline (omega=0). Functionally, involved in protein export. Acts as a chaperone by maintaining the newly synthesized protein in an open conformation. Functions as a peptidyl-prolyl cis-trans isomerase. In Chlorobium limicola (strain DSM 245 / NBRC 103803 / 6330), this protein is Trigger factor.